The following is a 313-amino-acid chain: Pyrimidine-specific ribonucleoside hydrolase RihB (313 aa).

Asp11 serves as the catalytic Proton acceptor. Ca(2+)-binding residues include Asp11, Asp16, and Val124. Positions 227 and 239 each coordinate substrate. Asp240 is a binding site for Ca(2+).

The protein belongs to the IUNH family. RihB subfamily. As to quaternary structure, homotetramer. Requires Ca(2+) as cofactor.

It carries out the reaction a pyrimidine ribonucleoside + H2O = a pyrimidine nucleobase + D-ribose. Hydrolyzes cytidine or uridine to ribose and cytosine or uracil, respectively. Has a clear preference for cytidine over uridine. Strictly specific for ribonucleosides. The polypeptide is Pyrimidine-specific ribonucleoside hydrolase RihB (Escherichia coli (strain K12 / DH10B)).